Here is a 140-residue protein sequence, read N- to C-terminus: Arsenate reductase ArsI2 (140 aa).

The active-site Nucleophile; cysteine thioarsenate intermediate is Cys10.

The protein belongs to the ArsC family.

The catalysed reaction is [glutaredoxin]-dithiol + arsenate + glutathione + H(+) = glutathionyl-S-S-[glutaredoxin] + arsenite + H2O. In terms of biological role, catalyzes the reduction of arsenate [As(V)] to arsenite [As(III)]. Does not constitute the major arsenate reductase in cells: essential only in the absence of ArsC (AC P74313). This chain is Arsenate reductase ArsI2, found in Synechocystis sp. (strain ATCC 27184 / PCC 6803 / Kazusa).